We begin with the raw amino-acid sequence, 348 residues long: Anthranilate phosphoribosyltransferase (348 aa).

Residues G81, 84-85, 91-94, 109-117, and S121 contribute to the 5-phospho-alpha-D-ribose 1-diphosphate site; these read GD, NVST, and KHGNRAVSG. An anthranilate-binding site is contributed by G81. A Mg(2+)-binding site is contributed by S93. N112 provides a ligand contact to anthranilate. Position 167 (R167) interacts with anthranilate. D226 and E227 together coordinate Mg(2+).

This sequence belongs to the anthranilate phosphoribosyltransferase family. In terms of assembly, homodimer. It depends on Mg(2+) as a cofactor.

It carries out the reaction N-(5-phospho-beta-D-ribosyl)anthranilate + diphosphate = 5-phospho-alpha-D-ribose 1-diphosphate + anthranilate. It participates in amino-acid biosynthesis; L-tryptophan biosynthesis; L-tryptophan from chorismate: step 2/5. Functionally, catalyzes the transfer of the phosphoribosyl group of 5-phosphorylribose-1-pyrophosphate (PRPP) to anthranilate to yield N-(5'-phosphoribosyl)-anthranilate (PRA). In Ectopseudomonas mendocina (strain ymp) (Pseudomonas mendocina), this protein is Anthranilate phosphoribosyltransferase.